Consider the following 69-residue polypeptide: Sperm protamine P1 (69 aa).

Residues 1 to 69 (MARYRHSRSR…YSRRRRRRYY (69 aa)) are disordered.

This sequence belongs to the protamine P1 family. In terms of tissue distribution, testis.

It is found in the nucleus. The protein localises to the chromosome. Functionally, protamines substitute for histones in the chromatin of sperm during the haploid phase of spermatogenesis. They compact sperm DNA into a highly condensed, stable and inactive complex. The polypeptide is Sperm protamine P1 (PRM1) (Pseudochirops cupreus (Coppery ringtail)).